Here is a 110-residue protein sequence, read N- to C-terminus: Ig kappa chain V region 3547 (110 aa).

The tract at residues 1–23 (AYDMTQTPSSVSAAVGGTVTINC) is framework-1. Residues 24–34 (QASEDISANLA) form a complementarity-determining-1 region. A framework-2 region spans residues 35–49 (WYQQKPGQPPKLLIY). The tract at residues 50–56 (AASDLAS) is complementarity-determining-2. Residues 57-88 (GVPSRFKGSGSGTEYTLTISGVQCADAATYYC) are framework-3. The complementarity-determining-3 stretch occupies residues 89–99 (QSADYSGSAVT). The tract at residues 100 to 109 (FGGGTEVVVK) is framework-4.

The sequence is that of Ig kappa chain V region 3547 from Oryctolagus cuniculus (Rabbit).